We begin with the raw amino-acid sequence, 139 residues long: Translation initiation factor 2 subunit beta (139 aa).

It belongs to the eIF-2-beta/eIF-5 family. In terms of assembly, heterotrimer composed of an alpha, a beta and a gamma chain.

Functionally, eIF-2 functions in the early steps of protein synthesis by forming a ternary complex with GTP and initiator tRNA. This Saccharolobus solfataricus (strain ATCC 35092 / DSM 1617 / JCM 11322 / P2) (Sulfolobus solfataricus) protein is Translation initiation factor 2 subunit beta.